The primary structure comprises 124 residues: Small ribosomal subunit protein uS12 (124 aa).

Asp-89 carries the 3-methylthioaspartic acid modification.

This sequence belongs to the universal ribosomal protein uS12 family. Part of the 30S ribosomal subunit. Contacts proteins S8 and S17. May interact with IF1 in the 30S initiation complex.

Functionally, with S4 and S5 plays an important role in translational accuracy. Interacts with and stabilizes bases of the 16S rRNA that are involved in tRNA selection in the A site and with the mRNA backbone. Located at the interface of the 30S and 50S subunits, it traverses the body of the 30S subunit contacting proteins on the other side and probably holding the rRNA structure together. The combined cluster of proteins S8, S12 and S17 appears to hold together the shoulder and platform of the 30S subunit. The sequence is that of Small ribosomal subunit protein uS12 from Moorella thermoacetica (strain ATCC 39073 / JCM 9320).